Reading from the N-terminus, the 189-residue chain is Elongation factor P (189 aa).

The protein belongs to the elongation factor P family.

The protein resides in the cytoplasm. Its pathway is protein biosynthesis; polypeptide chain elongation. In terms of biological role, involved in peptide bond synthesis. Stimulates efficient translation and peptide-bond synthesis on native or reconstituted 70S ribosomes in vitro. Probably functions indirectly by altering the affinity of the ribosome for aminoacyl-tRNA, thus increasing their reactivity as acceptors for peptidyl transferase. In Ehrlichia chaffeensis (strain ATCC CRL-10679 / Arkansas), this protein is Elongation factor P.